The chain runs to 270 residues: Phospholipase A and acyltransferase 5 (270 aa).

Disordered regions lie at residues 1–54 (MGLS…SASS) and 70–122 (RRLE…NPRP). 2 stretches are compositionally biased toward polar residues: residues 24-54 (TQIS…SASS) and 100-116 (IPTS…NQAV). An LRAT domain is found at 127–240 (LIEIFRIGYE…LRYGVPRSQQ (114 aa)). Catalysis depends on residues H137 and H149. C224 (acyl-thioester intermediate) is an active-site residue.

The protein belongs to the H-rev107 family. As to expression, isoform 4 shows highest expression level in testis.

It is found in the cytoplasm. The protein resides in the cytosol. The enzyme catalyses a 1,2-diacyl-sn-glycero-3-phosphocholine + H2O = a 1-acyl-sn-glycero-3-phosphocholine + a fatty acid + H(+). It catalyses the reaction a 1,2-diacyl-sn-glycero-3-phosphocholine + H2O = a 2-acyl-sn-glycero-3-phosphocholine + a fatty acid + H(+). It carries out the reaction 1-hexadecanoyl-2-(5Z,8Z,11Z,14Z-eicosatetraenoyl)-sn-glycero-3-phosphocholine + 1,2-di-(9Z-octadecenoyl)-sn-glycero-3-phosphoethanolamine = N-(5Z,8Z,11Z,14Z-eicosatetraenoyl)-1,2-di-(9Z-octadecenoyl)-sn-glycero-3-phosphoethanolamine + 1-hexadecanoyl-sn-glycero-3-phosphocholine + H(+). The catalysed reaction is 1,2-di-(9Z-octadecenoyl)-sn-glycero-3-phosphoethanolamine + 1,2-dihexadecanoyl-sn-glycero-3-phosphocholine = N-hexadecanoyl-1,2-di-(9Z-octadecenoyl)-sn-glycero-3-phosphoethanolamine + 1-hexadecanoyl-sn-glycero-3-phosphocholine + H(+). The enzyme catalyses 1,2-di-(9Z-octadecenoyl)-sn-glycero-3-phosphoethanolamine + 1,2-dihexadecanoyl-sn-glycero-3-phosphocholine = N-hexadecanoyl-1,2-di-(9Z-octadecenoyl)-sn-glycero-3-phosphoethanolamine + 2-hexadecanoyl-sn-glycero-3-phosphocholine + H(+). It catalyses the reaction a 1,2-diacyl-sn-glycero-3-phosphoethanolamine + a 1,2-diacyl-sn-glycero-3-phosphocholine = an N-acyl-1,2-diacyl-sn-glycero-3-phosphoethanolamine + a 1-acyl-sn-glycero-3-phosphocholine + H(+). It carries out the reaction a 1,2-diacyl-sn-glycero-3-phosphoethanolamine + a 1,2-diacyl-sn-glycero-3-phosphocholine = an N-acyl-1,2-diacyl-sn-glycero-3-phosphoethanolamine + a 2-acyl-sn-glycero-3-phosphocholine + H(+). The catalysed reaction is 1-hexadecanoyl-2-(9Z-octadecenoyl)-sn-glycero-3-phosphocholine + 1,2-di-(9Z-octadecenoyl)-sn-glycero-3-phosphoethanolamine = N,1,2-tri-(9Z-octadecenoyl)-sn-glycero-3-phosphoethanolamine + 1-hexadecanoyl-sn-glycero-3-phosphocholine + H(+). Its function is as follows. Exhibits both phospholipase A1/2 and acyltransferase activities. Shows phospholipase A1 (PLA1) and A2 (PLA2) activity, catalyzing the calcium-independent release of fatty acids from the sn-1 or sn-2 position of glycerophospholipids. Shows N-acyltransferase activity, catalyzing the calcium-independent transfer of a fatty acyl group at the sn-1 position of phosphatidylcholine (PC) and other glycerophospholipids to the primary amine of phosphatidylethanolamine (PE), forming N-acylphosphatidylethanolamine (NAPE), which serves as precursor for N-acylethanolamines (NAEs). This chain is Phospholipase A and acyltransferase 5, found in Mus musculus (Mouse).